The primary structure comprises 200 residues: ATP-dependent Clp protease proteolytic subunit 2 (200 aa).

S99 serves as the catalytic Nucleophile. H124 is a catalytic residue.

This sequence belongs to the peptidase S14 family. In terms of assembly, fourteen ClpP subunits assemble into 2 heptameric rings which stack back to back to give a disk-like structure with a central cavity, resembling the structure of eukaryotic proteasomes.

It is found in the cytoplasm. The enzyme catalyses Hydrolysis of proteins to small peptides in the presence of ATP and magnesium. alpha-casein is the usual test substrate. In the absence of ATP, only oligopeptides shorter than five residues are hydrolyzed (such as succinyl-Leu-Tyr-|-NHMec, and Leu-Tyr-Leu-|-Tyr-Trp, in which cleavage of the -Tyr-|-Leu- and -Tyr-|-Trp bonds also occurs).. Functionally, cleaves peptides in various proteins in a process that requires ATP hydrolysis. Has a chymotrypsin-like activity. Plays a major role in the degradation of misfolded proteins. This Treponema denticola (strain ATCC 35405 / DSM 14222 / CIP 103919 / JCM 8153 / KCTC 15104) protein is ATP-dependent Clp protease proteolytic subunit 2.